Reading from the N-terminus, the 287-residue chain is Large ribosomal subunit protein uL5m (287 aa).

The N-terminal 18 residues, 1 to 18 (MLGIRKNIRISVNFLQRR), are a transit peptide targeting the mitochondrion. A compositionally biased stretch (basic and acidic residues) spans 80-89 (DEHTQKDRLP). The segment at 80–109 (DEHTQKDRLPRWIGDNPYYKNRPPQKMRGN) is disordered.

The protein belongs to the universal ribosomal protein uL5 family. As to quaternary structure, component of the mitochondrial large ribosomal subunit (mt-LSU). Mature yeast 74S mitochondrial ribosomes consist of a small (37S) and a large (54S) subunit. The 37S small subunit contains a 15S ribosomal RNA (15S mt-rRNA) and at least 32 different proteins. The 54S large subunit contains a 21S rRNA (21S mt-rRNA) and at least 45 different proteins. Unlike bacterial L5, uL5m does not bind zinc.

Its subcellular location is the mitochondrion. Functionally, component of the mitochondrial ribosome (mitoribosome), a dedicated translation machinery responsible for the synthesis of mitochondrial genome-encoded proteins, including at least some of the essential transmembrane subunits of the mitochondrial respiratory chain. The mitoribosomes are attached to the mitochondrial inner membrane and translation products are cotranslationally integrated into the membrane. The protein is Large ribosomal subunit protein uL5m (mrpl7) of Schizosaccharomyces pombe (strain 972 / ATCC 24843) (Fission yeast).